We begin with the raw amino-acid sequence, 546 residues long: Cation/calcium exchanger 5 (546 aa).

The next 13 helical transmembrane spans lie at 13-33 (ALCL…TTIP), 88-108 (NLFF…YILI), 134-154 (AVTL…VAAL), 163-183 (FGAI…FVAI), 194-214 (SFVR…YVYL), 218-238 (IFVW…GFVF), 323-343 (SANI…FVQL), 356-376 (LPLW…HFTV), 388-408 (VIVV…GELL), 423-445 (ALLG…DVAV), 455-475 (MAGC…SALV), 492-512 (VGIV…LLVI), and 522-542 (FWGI…LIIA).

It belongs to the Ca(2+):cation antiporter (CaCA) (TC 2.A.19) family. Cation/calcium exchanger (CCX) subfamily.

It localises to the cell membrane. In terms of biological role, membrane-localized H(+)-dependent K(+) and Na(+) transporter. In Arabidopsis thaliana (Mouse-ear cress), this protein is Cation/calcium exchanger 5 (CCX5).